The sequence spans 678 residues: Serine/threonine-protein kinase PLK (678 aa).

In terms of domain architecture, Protein kinase spans Tyr-22 to Leu-309. Residues Leu-28 to Val-36 and Lys-51 contribute to the ATP site. The Proton acceptor role is filled by Asp-145. Residues Thr-179 and Thr-183 each carry the phosphothreonine; by autocatalysis modification. POLO box domains are found at residues Tyr-435–Asn-516 and Phe-563–Ala-644. The tract at residues Lys-658 to Glu-678 is disordered. Positions Lys-663–Glu-678 are enriched in polar residues.

This sequence belongs to the protein kinase superfamily. Ser/Thr protein kinase family. CDC5/Polo subfamily. As to quaternary structure, interacts with Kin-13. Autophosphorylated. Autophosphorylation is critical for its function in cell growth, cytokinesis and formation of flagella.

It is found in the cell projection. It localises to the cilium. Its subcellular location is the flagellum. The protein resides in the cytoplasm. The protein localises to the cytoskeleton. It is found in the flagellum basal body. It localises to the flagellum axoneme. Its subcellular location is the spindle. The protein resides in the membrane. It catalyses the reaction L-seryl-[protein] + ATP = O-phospho-L-seryl-[protein] + ADP + H(+). It carries out the reaction L-threonyl-[protein] + ATP = O-phospho-L-threonyl-[protein] + ADP + H(+). Inhibited by GW843286X (GW), an ATP-competitive inhibitor. Inhibition leads to reduced growth, increased number of cells with more than four nuclei, increased number of cells with condensed nuclei, cell cycle arrest at G2/M or G1/S phase depending on the treatment time with GW, and increased length of membrane-bound portions of the caudal and anterior flagella. Its function is as follows. Involved in cell cycle. Involved in cell division. Involved in cytokinesis. Involved in flagella biogenesis and in regulation of flagella length in interphase. Involved in formation of median bodies during interphase. Phosphorylates Kin-13 in vitro. Likely regulates microtubule (MT) depolymerizing activity of Kin-13. The protein is Serine/threonine-protein kinase PLK of Giardia intestinalis (strain ATCC 50803 / WB clone C6) (Giardia lamblia).